The following is a 63-amino-acid chain: Large ribosomal subunit protein uL29 (63 aa).

This sequence belongs to the universal ribosomal protein uL29 family.

The protein is Large ribosomal subunit protein uL29 of Chromohalobacter salexigens (strain ATCC BAA-138 / DSM 3043 / CIP 106854 / NCIMB 13768 / 1H11).